The sequence spans 69 residues: Putative membrane protein insertion efficiency factor (69 aa).

This sequence belongs to the UPF0161 family.

The protein resides in the cell membrane. Functionally, could be involved in insertion of integral membrane proteins into the membrane. This chain is Putative membrane protein insertion efficiency factor, found in Caldanaerobacter subterraneus subsp. tengcongensis (strain DSM 15242 / JCM 11007 / NBRC 100824 / MB4) (Thermoanaerobacter tengcongensis).